A 463-amino-acid polypeptide reads, in one-letter code: MRLYDTLSGGVRDFAPLRPGHVSIYLCGATVQGLPHIGHVRSGVAFDVLRRWLTAKGFDVAFIRNVTDIDDKILHKAADAGRPWWEWAATYERAFTAAYDALGVLPPSAEPRATGHITQMVELIERLIERGHAYTGDGDVYFSVATLPDYGKLSGHRIDDVHQGEGVATGKRDQRDFTLWKGAKPGEPSWPTPWGRGRPGWHTECVAMCESYLGAAFDIHAGGMDLVFPHHENEIAQAEAAGDGFARFWLHNGWVTMGGEKMSKSLGNVLAIPAVLQRVRAAELRYYLGSAHYRSMLEFSETALQDAAKAYAGIEDFLHRVRTRVGAVVPGEWTPKFGAALDDDLAVPAALAEVHAARAEGNRALDAGDHDTALTHAMSIRAMMGILGADPLDERWESRDETSAALAAVDVLVQAEVQRREDARARRDWAEADAIRDRLKEAGIEVTDTADGPQWSLLDGTDK.

A Zn(2+)-binding site is contributed by cysteine 27. Residues 29 to 39 (ATVQGLPHIGH) carry the 'HIGH' region motif. Zn(2+) is bound by residues cysteine 205, histidine 230, and glutamate 234. A 'KMSKS' region motif is present at residues 261–265 (KMSKS). Lysine 264 provides a ligand contact to ATP.

This sequence belongs to the class-I aminoacyl-tRNA synthetase family. In terms of assembly, monomer. It depends on Zn(2+) as a cofactor.

Its subcellular location is the cytoplasm. It catalyses the reaction tRNA(Cys) + L-cysteine + ATP = L-cysteinyl-tRNA(Cys) + AMP + diphosphate. This Mycolicibacterium vanbaalenii (strain DSM 7251 / JCM 13017 / BCRC 16820 / KCTC 9966 / NRRL B-24157 / PYR-1) (Mycobacterium vanbaalenii) protein is Cysteine--tRNA ligase.